A 294-amino-acid chain; its full sequence is uncharacterized protein (294 aa).

The segment at 1–215 (MTTAITPDKK…DQDDDDQKDL (215 aa)) is disordered. Basic residues-rich tracts occupy residues 27–43 (TKPR…KSKK) and 50–78 (AKKR…KKAP). Positions 79–88 (MKAPSKPAAK) are enriched in low complexity. Over residues 92-102 (QQAQASLQKPI) the composition is skewed to polar residues. Residues 118–136 (PRPPTPIPPTGVKPEPAPR) show a composition bias toward pro residues. Residues 145-160 (SVSSTTPRTSATTGTT) are compositionally biased toward low complexity.

This is an uncharacterized protein from Caenorhabditis elegans.